The chain runs to 491 residues: Nickel-binding protein NikA (491 aa).

A signal peptide spans 1 to 18 (MKFKRLATIFSAVLVLSG). Cys19 is lipidated: N-palmitoyl cysteine. The S-diacylglycerol cysteine moiety is linked to residue Cys19.

The protein belongs to the bacterial solute-binding protein 5 family. In terms of assembly, the complex is composed of two ATP-binding proteins (NikD and NikE), two transmembrane proteins (NikB and NikC) and a solute-binding protein (NikA).

It is found in the cell membrane. Functionally, part of the ABC transporter complex NikABCDE (Opp2) involved in nickel import. Binds nickel and transfers it to the membrane-bound permease. Required for full urease activity and plays a significant role in the virulence of S.aureus during urinary tract infection (UTI). May bind nickel via a nickel-chelator. The protein is Nickel-binding protein NikA of Staphylococcus aureus (strain NCTC 8325 / PS 47).